We begin with the raw amino-acid sequence, 69 residues long: uncharacterized protein (69 aa).

This is an uncharacterized protein from Treponema pallidum (strain Nichols).